Reading from the N-terminus, the 430-residue chain is Glutamate-1-semialdehyde 2,1-aminomutase 2 (430 aa).

The residue at position 269 (Lys269) is an N6-(pyridoxal phosphate)lysine.

Belongs to the class-III pyridoxal-phosphate-dependent aminotransferase family. HemL subfamily. As to quaternary structure, homodimer. Pyridoxal 5'-phosphate serves as cofactor.

The protein resides in the cytoplasm. It catalyses the reaction (S)-4-amino-5-oxopentanoate = 5-aminolevulinate. The protein operates within porphyrin-containing compound metabolism; protoporphyrin-IX biosynthesis; 5-aminolevulinate from L-glutamyl-tRNA(Glu): step 2/2. This chain is Glutamate-1-semialdehyde 2,1-aminomutase 2, found in Lysinibacillus sphaericus (strain C3-41).